The primary structure comprises 399 residues: uncharacterized protein (399 aa).

Transmembrane regions (helical) follow at residues 46 to 66 (IAPY…FFIV), 76 to 95 (TLPR…YQTM), 139 to 159 (GVGY…FWMA), 181 to 201 (IIII…FWTF), 226 to 246 (LMLN…TCFF), 262 to 282 (ILPA…SFIW), 303 to 323 (VQFS…LAHM), 330 to 350 (IIQA…INYF), and 352 to 372 (GTII…SFVH).

Belongs to the CDP-alcohol phosphatidyltransferase class-I family.

It is found in the membrane. This is an uncharacterized protein from Dictyostelium discoideum (Social amoeba).